The sequence spans 398 residues: S-adenosylmethionine synthase (398 aa).

Residue His-17 participates in ATP binding. Asp-19 serves as a coordination point for Mg(2+). Glu-45 contributes to the K(+) binding site. L-methionine is bound by residues Glu-58 and Gln-101. Residues Gln-101–Lys-111 are flexible loop. Residues Asp-176 to Lys-178, Arg-243 to Phe-244, Asp-252, Arg-258 to Lys-259, and Lys-279 contribute to the ATP site. Asp-252 is an L-methionine binding site. An L-methionine-binding site is contributed by Lys-283.

Belongs to the AdoMet synthase family. In terms of assembly, homotetramer; dimer of dimers. Requires Mg(2+) as cofactor. K(+) is required as a cofactor.

The protein resides in the cytoplasm. It catalyses the reaction L-methionine + ATP + H2O = S-adenosyl-L-methionine + phosphate + diphosphate. It functions in the pathway amino-acid biosynthesis; S-adenosyl-L-methionine biosynthesis; S-adenosyl-L-methionine from L-methionine: step 1/1. Catalyzes the formation of S-adenosylmethionine (AdoMet) from methionine and ATP. The overall synthetic reaction is composed of two sequential steps, AdoMet formation and the subsequent tripolyphosphate hydrolysis which occurs prior to release of AdoMet from the enzyme. This is S-adenosylmethionine synthase from Staphylococcus aureus (strain Mu3 / ATCC 700698).